Consider the following 293-residue polypeptide: Undecaprenyl-diphosphatase (293 aa).

A run of 6 helical transmembrane segments spans residues 74–94, 107–127, 134–154, 209–229, 243–263, and 271–291; these read VLVF…AGVF, WMII…KDLI, MWIT…AEKM, FLLA…DAFA, VGTL…MKFV, and FAAY…LGML.

The protein belongs to the UppP family.

It localises to the cell membrane. The catalysed reaction is di-trans,octa-cis-undecaprenyl diphosphate + H2O = di-trans,octa-cis-undecaprenyl phosphate + phosphate + H(+). In terms of biological role, catalyzes the dephosphorylation of undecaprenyl diphosphate (UPP). Confers resistance to bacitracin. The sequence is that of Undecaprenyl-diphosphatase from Corynebacterium glutamicum (strain ATCC 13032 / DSM 20300 / JCM 1318 / BCRC 11384 / CCUG 27702 / LMG 3730 / NBRC 12168 / NCIMB 10025 / NRRL B-2784 / 534).